The chain runs to 357 residues: MAIDENKQKALAAALGQIEKQFGKGSIMRLGEDRSMDVETISTGSLSLDIALGAGGLPMGRIVEIYGPESSGKTTLTLQVIAAAQREGKTCAFIDAEHALDPIYAKKLGVDIDNLLCSQPDTGEQALEICDALTRSGAVDVIIVDSVAALTPKAEIEGEIGDSHMGLAARMMSQAMRKLAGNLKQANTLLIFINQIRMKIGVMFGNPETTTGGNALKFYASVRLDIRRTGAIKEGEEVVGSETRVKVVKNKVAAPFKQAEFQILYGEGINIHGELVDLGVKHKLIEKAGAWYSYNGDKIGQGKANACNFLKENPTISAELDKKLREMLLHKGNELKPAAAGNSHDEDELAGEGKEEF.

67–74 (GPESSGKT) serves as a coordination point for ATP. The segment at 334-357 (ELKPAAAGNSHDEDELAGEGKEEF) is disordered.

This sequence belongs to the RecA family.

It localises to the cytoplasm. Can catalyze the hydrolysis of ATP in the presence of single-stranded DNA, the ATP-dependent uptake of single-stranded DNA by duplex DNA, and the ATP-dependent hybridization of homologous single-stranded DNAs. It interacts with LexA causing its activation and leading to its autocatalytic cleavage. The sequence is that of Protein RecA from Pectobacterium atrosepticum (strain SCRI 1043 / ATCC BAA-672) (Erwinia carotovora subsp. atroseptica).